Reading from the N-terminus, the 362-residue chain is Peptide chain release factor 1 (362 aa).

Position 237 is an N5-methylglutamine (glutamine 237).

The protein belongs to the prokaryotic/mitochondrial release factor family. Methylated by PrmC. Methylation increases the termination efficiency of RF1.

It is found in the cytoplasm. Peptide chain release factor 1 directs the termination of translation in response to the peptide chain termination codons UAG and UAA. The polypeptide is Peptide chain release factor 1 (Aeromonas salmonicida (strain A449)).